Reading from the N-terminus, the 141-residue chain is Hemoglobin subunit alpha (141 aa).

Residues 1–141 (VLSSTDKSNV…VSTVLTSKYR (141 aa)) form the Globin domain. The residue at position 3 (Ser3) is a Phosphoserine. An N6-succinyllysine mark is found at Lys7 and Lys11. N6-acetyllysine; alternate is present on Lys16. Lys16 bears the N6-succinyllysine; alternate mark. Tyr24 is modified (phosphotyrosine). Position 35 is a phosphoserine (Ser35). Lys40 carries the N6-succinyllysine modification. Position 58 (His58) interacts with O2. His87 contacts heme b. Residue Ser102 is modified to Phosphoserine. Thr108 is modified (phosphothreonine). Residues Ser124 and Ser131 each carry the phosphoserine modification. 2 positions are modified to phosphothreonine: Thr134 and Thr137. At Ser138 the chain carries Phosphoserine.

Belongs to the globin family. As to quaternary structure, heterotetramer of two alpha chains and two beta chains. In terms of tissue distribution, red blood cells.

In terms of biological role, involved in oxygen transport from the lung to the various peripheral tissues. Its function is as follows. Hemopressin acts as an antagonist peptide of the cannabinoid receptor CNR1. Hemopressin-binding efficiently blocks cannabinoid receptor CNR1 and subsequent signaling. In Pteropus poliocephalus (Grey-headed flying fox), this protein is Hemoglobin subunit alpha (HBA).